A 143-amino-acid polypeptide reads, in one-letter code: Ponticulin (143 aa).

A signal peptide spans 1-22 (MLVLRNLLALVTLALLFTLSSA). Asn-111 is a glycosylation site (N-linked (GlcNAc...) asparagine). Residue Ser-118 is the site of GPI-like-anchor amidated serine attachment. The propeptide at 119-143 (SSGSTVMIGLASSLLFAFATLLALF) is removed in mature form.

This sequence belongs to the ponticulin family. As to quaternary structure, monomer. Disulfide bond(s) stabilize the native, actin-binding conformation of ponticulin. Post-translationally, the GPI-like-anchor contains a phosphoceramide group, rather than a phosphatidyl group.

The protein resides in the cell membrane. Its function is as follows. Binds F-actin and nucleates actin assembly. Major high affinity link between the plasma membrane and the cortical actin network. This is Ponticulin (ponA) from Dictyostelium discoideum (Social amoeba).